The chain runs to 35 residues: Thionin NsW2 (35 aa).

3 cysteine pairs are disulfide-bonded: cysteine 4-cysteine 32, cysteine 12-cysteine 30, and cysteine 16-cysteine 26.

In terms of processing, contains 4 disulfide bonds.

It localises to the secreted. Its function is as follows. Antimicrobial peptide disrupting membranes. Has antibacterial against Gram-positive bacteria S.aureus (MIC=6.5 uM) and B.subtilis (MIC=3.25 uM) but not against Gram-negative bacterium E.coli. Has antifungal activity against C.albicans (MIC=3.25 uM). The chain is Thionin NsW2 from Nigella sativa (Black cumin).